The chain runs to 101 residues: Protein Tat (101 aa).

Residues 1–24 (MEPVDPNLEPWKHPGSQPRTACNN) form an interaction with human CREBBP region. Residues 1-48 (MEPVDPNLEPWKHPGSQPRTACNNCYCKKCCFHCYACFTRKGLGISYG) form a transactivation region. Residues Cys-22, Cys-25, and Cys-27 each coordinate Zn(2+). The tract at residues 22 to 37 (CNNCYCKKCCFHCYAC) is cysteine-rich. N6-acetyllysine; by host PCAF is present on Lys-28. The Zn(2+) site is built by Cys-30, His-33, Cys-34, and Cys-37. A core region spans residues 38–48 (FTRKGLGISYG). Positions 48 to 57 (GRKKRRQRRR) are enriched in basic residues. A disordered region spans residues 48–101 (GRKKRRQRRRAPQDSQTHQASLSKQPASQSRGDPTGPTESKKKVERETETDPFD). The Nuclear localization signal, RNA-binding (TAR), and protein transduction signature appears at 49–57 (RKKRRQRRR). The tract at residues 49 to 86 (RKKRRQRRRAPQDSQTHQASLSKQPASQSRGDPTGPTE) is interaction with the host capping enzyme RNGTT. 2 positions are modified to N6-acetyllysine; by host EP300 and GCN5L2: Lys-50 and Lys-51. Asymmetric dimethylarginine; by host PRMT6 occurs at positions 52 and 53. Polar residues predominate over residues 60–79 (QDSQTHQASLSKQPASQSRG). Lys-71 participates in a covalent cross-link: Glycyl lysine isopeptide (Lys-Gly) (interchain with G-Cter in ubiquitin). The Cell attachment site motif lies at 78–80 (RGD). The segment covering 86–101 (ESKKKVERETETDPFD) has biased composition (basic and acidic residues).

This sequence belongs to the lentiviruses Tat family. As to quaternary structure, interacts with host CCNT1. Associates with the P-TEFb complex composed at least of Tat, P-TEFb (CDK9 and CCNT1), TAR RNA, RNA Pol II. Recruits the HATs CREBBP, TAF1/TFIID, EP300, PCAF and GCN5L2. Interacts with host KAT5/Tip60; this interaction targets the latter to degradation. Interacts with the host deacetylase SIRT1. Interacts with host capping enzyme RNGTT; this interaction stimulates RNGTT. Binds to host KDR, and to the host integrins ITGAV/ITGB3 and ITGA5/ITGB1. Interacts with host KPNB1/importin beta-1 without previous binding to KPNA1/importin alpha-1. Interacts with EIF2AK2. Interacts with host nucleosome assembly protein NAP1L1; this interaction may be required for the transport of Tat within the nucleus, since the two proteins interact at the nuclear rim. Interacts with host C1QBP/SF2P32; this interaction involves lysine-acetylated Tat. Interacts with the host chemokine receptors CCR2, CCR3 and CXCR4. Interacts with host DPP4/CD26; this interaction may trigger an anti-proliferative effect. Interacts with host LDLR. Interacts with the host extracellular matrix metalloproteinase MMP1. Interacts with host PRMT6; this interaction mediates Tat's methylation. Interacts with, and is ubiquitinated by MDM2/Hdm2. Interacts with host PSMC3 and HTATIP2. Interacts with STAB1; this interaction may overcome SATB1-mediated repression of IL2 and IL2RA (interleukin) in T cells by binding to the same domain than HDAC1. Interacts (when acetylated) with human CDK13, thereby increasing HIV-1 mRNA splicing and promoting the production of the doubly spliced HIV-1 protein Nef. Interacts with host TBP; this interaction modulates the activity of transcriptional pre-initiation complex. Interacts with host RELA. Interacts with host PLSCR1; this interaction negatively regulates Tat transactivation activity by altering its subcellular distribution. Asymmetrical arginine methylation by host PRMT6 seems to diminish the transactivation capacity of Tat and affects the interaction with host CCNT1. In terms of processing, acetylation by EP300, CREBBP, GCN5L2/GCN5 and PCAF regulates the transactivation activity of Tat. EP300-mediated acetylation of Lys-50 promotes dissociation of Tat from the TAR RNA through the competitive binding to PCAF's bromodomain. In addition, the non-acetylated Tat's N-terminus can also interact with PCAF. PCAF-mediated acetylation of Lys-28 enhances Tat's binding to CCNT1. Lys-50 is deacetylated by SIRT1. Post-translationally, polyubiquitination by host MDM2 does not target Tat to degradation, but activates its transactivation function and fosters interaction with CCNT1 and TAR RNA. Phosphorylated by EIF2AK2 on serine and threonine residues adjacent to the basic region important for TAR RNA binding and function. Phosphorylation of Tat by EIF2AK2 is dependent on the prior activation of EIF2AK2 by dsRNA.

The protein localises to the host nucleus. It localises to the host nucleolus. It is found in the host cytoplasm. Its subcellular location is the secreted. Transcriptional activator that increases RNA Pol II processivity, thereby increasing the level of full-length viral transcripts. Recognizes a hairpin structure at the 5'-LTR of the nascent viral mRNAs referred to as the transactivation responsive RNA element (TAR) and recruits the cyclin T1-CDK9 complex (P-TEFb complex) that will in turn hyperphosphorylate the RNA polymerase II to allow efficient elongation. The CDK9 component of P-TEFb and other Tat-activated kinases hyperphosphorylate the C-terminus of RNA Pol II that becomes stabilized and much more processive. Other factors such as HTATSF1/Tat-SF1, SUPT5H/SPT5, and HTATIP2 are also important for Tat's function. Besides its effect on RNA Pol II processivity, Tat induces chromatin remodeling of proviral genes by recruiting the histone acetyltransferases (HATs) CREBBP, EP300 and PCAF to the chromatin. This also contributes to the increase in proviral transcription rate, especially when the provirus integrates in transcriptionally silent region of the host genome. To ensure maximal activation of the LTR, Tat mediates nuclear translocation of NF-kappa-B by interacting with host RELA. Through its interaction with host TBP, Tat may also modulate transcription initiation. Tat can reactivate a latently infected cell by penetrating in it and transactivating its LTR promoter. In the cytoplasm, Tat is thought to act as a translational activator of HIV-1 mRNAs. Its function is as follows. Extracellular circulating Tat can be endocytosed by surrounding uninfected cells via the binding to several surface receptors such as CD26, CXCR4, heparan sulfate proteoglycans (HSPG) or LDLR. Neurons are rarely infected, but they internalize Tat via their LDLR. Through its interaction with nuclear HATs, Tat is potentially able to control the acetylation-dependent cellular gene expression. Modulates the expression of many cellular genes involved in cell survival, proliferation or in coding for cytokines or cytokine receptors. Tat plays a role in T-cell and neurons apoptosis. Tat induced neurotoxicity and apoptosis probably contribute to neuroAIDS. Circulating Tat also acts as a chemokine-like and/or growth factor-like molecule that binds to specific receptors on the surface of the cells, affecting many cellular pathways. In the vascular system, Tat binds to ITGAV/ITGB3 and ITGA5/ITGB1 integrins dimers at the surface of endothelial cells and competes with bFGF for heparin-binding sites, leading to an excess of soluble bFGF. The chain is Protein Tat from Homo sapiens (Human).